A 556-amino-acid chain; its full sequence is Formate--tetrahydrofolate ligase (556 aa).

65–72 (TPAGEGKS) is a binding site for ATP.

This sequence belongs to the formate--tetrahydrofolate ligase family.

The catalysed reaction is (6S)-5,6,7,8-tetrahydrofolate + formate + ATP = (6R)-10-formyltetrahydrofolate + ADP + phosphate. The protein operates within one-carbon metabolism; tetrahydrofolate interconversion. This is Formate--tetrahydrofolate ligase from Clostridium novyi (strain NT).